The chain runs to 323 residues: NADH-ubiquinone oxidoreductase chain 1 (323 aa).

Transmembrane regions (helical) follow at residues 8 to 28, 75 to 95, 105 to 125, 151 to 171, 177 to 197, 234 to 254, 258 to 278, and 298 to 318; these read LINPLLYMIPILLAVAFLTLI, MFLIAPTMALALAMSIWAPLP, LGILFILALSSLAVYTILGSG, LGLILLCMIMLAGGFTYTTLM, MWLIIPGWPMAAMWYISTLAE, ANILMMNTLSYLILFLGSSFM, ELTTISLMIKSSILSMIFLWV, and FLPITLAMTLWHISLPISMLG.

It belongs to the complex I subunit 1 family. Core subunit of respiratory chain NADH dehydrogenase (Complex I) which is composed of 45 different subunits.

It is found in the mitochondrion inner membrane. The enzyme catalyses a ubiquinone + NADH + 5 H(+)(in) = a ubiquinol + NAD(+) + 4 H(+)(out). In terms of biological role, core subunit of the mitochondrial membrane respiratory chain NADH dehydrogenase (Complex I) which catalyzes electron transfer from NADH through the respiratory chain, using ubiquinone as an electron acceptor. Essential for the catalytic activity and assembly of complex I. The polypeptide is NADH-ubiquinone oxidoreductase chain 1 (mt-nd1) (Xenopus laevis (African clawed frog)).